Consider the following 306-residue polypeptide: tRNA dimethylallyltransferase (306 aa).

11 to 18 (APTAAGKT) lines the ATP pocket. Residue 13–18 (TAAGKT) coordinates substrate.

It belongs to the IPP transferase family. Monomer. Requires Mg(2+) as cofactor.

The enzyme catalyses adenosine(37) in tRNA + dimethylallyl diphosphate = N(6)-dimethylallyladenosine(37) in tRNA + diphosphate. Catalyzes the transfer of a dimethylallyl group onto the adenine at position 37 in tRNAs that read codons beginning with uridine, leading to the formation of N6-(dimethylallyl)adenosine (i(6)A). This is tRNA dimethylallyltransferase from Deinococcus radiodurans (strain ATCC 13939 / DSM 20539 / JCM 16871 / CCUG 27074 / LMG 4051 / NBRC 15346 / NCIMB 9279 / VKM B-1422 / R1).